A 445-amino-acid polypeptide reads, in one-letter code: Cytochrome b (445 aa).

The Cytoplasmic portion of the chain corresponds to S2–V49. The chain crosses the membrane as a helical span at residues V50–M67. At H68–R94 the chain is on the periplasmic side. A helical transmembrane segment spans residues Y95–F113. Heme b contacts are provided by H97 and H111. Residues R114–W129 lie on the Cytoplasmic side of the membrane. A helical transmembrane segment spans residues I130–L149. Residues P150–R193 are Periplasmic-facing. The chain crosses the membrane as a helical span at residues F194–F216. The heme b site is built by H198 and H212. Residues H217 to D252 are Cytoplasmic-facing. Residues V253 to M270 form a helical membrane-spanning segment. Over P271–K329 the chain is Periplasmic. The chain crosses the membrane as a helical span at residues F330–V346. The Cytoplasmic portion of the chain corresponds to P347–K364. The helical transmembrane segment at I365–A382 threads the bilayer. The Periplasmic portion of the chain corresponds to Q383–P388. Residues Y389 to L408 form a helical membrane-spanning segment. The Cytoplasmic segment spans residues P409 to E445.

This sequence belongs to the cytochrome b family. As to quaternary structure, the main subunits of complex b-c1 are: cytochrome b, cytochrome c1 and the Rieske protein. Requires heme b as cofactor.

It localises to the cell membrane. Its function is as follows. Component of the ubiquinol-cytochrome c reductase complex (complex III or cytochrome b-c1 complex), which is a respiratory chain that generates an electrochemical potential coupled to ATP synthesis. This chain is Cytochrome b (petB), found in Cereibacter sphaeroides (Rhodobacter sphaeroides).